The chain runs to 303 residues: Bifunctional protein FolD 2 (303 aa).

NADP(+)-binding positions include 169-171, Ser-194, and Ile-235; that span reads GRS.

It belongs to the tetrahydrofolate dehydrogenase/cyclohydrolase family. In terms of assembly, homodimer.

The catalysed reaction is (6R)-5,10-methylene-5,6,7,8-tetrahydrofolate + NADP(+) = (6R)-5,10-methenyltetrahydrofolate + NADPH. The enzyme catalyses (6R)-5,10-methenyltetrahydrofolate + H2O = (6R)-10-formyltetrahydrofolate + H(+). The protein operates within one-carbon metabolism; tetrahydrofolate interconversion. Functionally, catalyzes the oxidation of 5,10-methylenetetrahydrofolate to 5,10-methenyltetrahydrofolate and then the hydrolysis of 5,10-methenyltetrahydrofolate to 10-formyltetrahydrofolate. This Pseudomonas putida (strain GB-1) protein is Bifunctional protein FolD 2.